The sequence spans 825 residues: Leucine-rich repeat and guanylate kinase domain-containing protein (825 aa).

Positions 73–96 (DSDGDEDQGEGEAGSEESSESEML) are disordered. 9 LRR repeats span residues 129–149 (YLNLTLSGCNLIDVSILCGYV), 150–171 (HLQKLDLSANKIEDLSCVSCMP), 172–193 (YLLELNASQNNLTTFFNFKPPK), 194–215 (NLKKADFSHNQISEICDLSAYH), 216–237 (ALTKLILDGNEIEEISGLEMCN), 238–259 (NLIHLSLANNKITTINGLNKLP), 260–280 (IKILCLSNNQIEMITGLEDLK), 281–302 (ALQNLDLSHNQISSLQGLENHD), and 303–324 (LLEVINLEDNKIAELREIEYIK). The LRRCT domain maps to 337 to 375 (NPIQEKSEYWFFVIFMLLRLTELDQKKIKVEEKVSAVNK). One can recognise a Guanylate kinase-like domain in the interval 414–597 (YPMLILAGPE…AYQKLSQLIR (184 aa)). An ATP-binding site is contributed by 421–428 (GPEACGKR). A disordered region spans residues 760–825 (PEGSISSHLG…TLPPIPQGRR (66 aa)). Polar residues predominate over residues 763-774 (SISSHLGSGASD). A compositionally biased stretch (pro residues) spans 816–825 (TLPPIPQGRR).

In terms of assembly, interacts (via guanylate kinase-like domain) with RIMBP3 (via coiled-coil region). Interacts (via guanylate kinase-like domain) with HOOK2. Interacts (via LRRCT domain) with KLC3. Interacts with HOOK1 and HOOK3.

The protein resides in the cytoplasmic vesicle. It localises to the secretory vesicle. It is found in the acrosome. Its subcellular location is the cytoplasm. The protein localises to the cytoskeleton. The protein resides in the cilium basal body. Its function is as follows. Involved in multiple aspects of sperm assembly including acrosome attachment, shaping of the sperm head and in the early aspects of axoneme development. Not essential for primary cilium biogenesis. The sequence is that of Leucine-rich repeat and guanylate kinase domain-containing protein (LRGUK) from Homo sapiens (Human).